A 249-amino-acid chain; its full sequence is MILELDCGNSFIKWRVIHVADAVIEGGGIVDSDQALVAEVAALASVRLTGCRIVSVRSEEETDALCALIAQAFAVQARVAHPVREMAGVRNGYDDYQRLGMDRWLAALGAFHLAKGACLVIDLGTAAKADFVSADGEHLGGYICPGMPLMRSQLRTHTRRIRYDDASAERALNSLSPGRSTVEAVERGCVLMLQGFAYTQLEQARVLWGEEFTVFLTGGDAPLVREALPQARVVPDLVFVGLAMACPLD.

6–13 (DCGNSFIK) is a binding site for ATP. Residues Tyr-93 and 100–103 (GMDR) each bind substrate. The Proton acceptor role is filled by Asp-102. Asp-122 serves as a coordination point for K(+). Thr-125 contributes to the ATP binding site. A substrate-binding site is contributed by Thr-181.

It belongs to the type III pantothenate kinase family. As to quaternary structure, homodimer. NH4(+) serves as cofactor. The cofactor is K(+).

It localises to the cytoplasm. The enzyme catalyses (R)-pantothenate + ATP = (R)-4'-phosphopantothenate + ADP + H(+). It participates in cofactor biosynthesis; coenzyme A biosynthesis; CoA from (R)-pantothenate: step 1/5. Catalyzes the phosphorylation of pantothenate (Pan), the first step in CoA biosynthesis. The sequence is that of Type III pantothenate kinase from Pseudomonas putida (strain ATCC 700007 / DSM 6899 / JCM 31910 / BCRC 17059 / LMG 24140 / F1).